The sequence spans 109 residues: Urease subunit gamma (109 aa).

The protein belongs to the urease gamma subunit family. As to quaternary structure, heterotrimer of UreA (gamma), UreB (beta) and UreC (alpha) subunits. Three heterotrimers associate to form the active enzyme.

The protein resides in the cytoplasm. It catalyses the reaction urea + 2 H2O + H(+) = hydrogencarbonate + 2 NH4(+). It participates in nitrogen metabolism; urea degradation; CO(2) and NH(3) from urea (urease route): step 1/1. The chain is Urease subunit gamma from Natronomonas pharaonis (strain ATCC 35678 / DSM 2160 / CIP 103997 / JCM 8858 / NBRC 14720 / NCIMB 2260 / Gabara) (Halobacterium pharaonis).